The chain runs to 297 residues: N-acetylmuramoyl-L-alanine amidase XlyA (297 aa).

The first 44 residues, 1–44 (MVNIIQDFIPVGANNRPGYAMTPLYITVHNTANTAVGADAAAHA), serve as a signal peptide directing secretion. Positions 45–140 (RYLKNPDTTT…KYWSGKECPR (96 aa)) constitute an N-acetylmuramoyl-L-alanine amidase domain. The 45-residue stretch at 159-203 (QTYVVKQGDTLTSIARAFGVTVAQLQEWNNIEDPNLIRVGQVLIV) folds into the LysM domain.

The protein belongs to the N-acetylmuramoyl-L-alanine amidase 2 family.

It is found in the secreted. The catalysed reaction is Hydrolyzes the link between N-acetylmuramoyl residues and L-amino acid residues in certain cell-wall glycopeptides.. Functionally, autolysins are involved in some important biological processes such as cell separation, cell-wall turnover, competence for genetic transformation, formation of the flagella and sporulation. The polypeptide is N-acetylmuramoyl-L-alanine amidase XlyA (xlyA) (Bacillus subtilis (strain 168)).